The sequence spans 173 residues: MNNPFALFDLPIEFQLDQNRLSERYLALQKALHPDNFANSSAQEQRLAMQKSAEVNDALQILKDPILRADCIIALNTGEQQNTEEKSTQDMAFLMQQMQWREQLEEIENTQDIDGLMTFSAEIEQSNKEKISEISTALSMKDWQQAKLINDRLRFIKKLMTEIERIEDKLADF.

One can recognise a J domain in the interval 3–75 (NPFALFDLPI…ILRADCIIAL (73 aa)).

Belongs to the HscB family. Interacts with HscA and stimulates its ATPase activity.

Co-chaperone involved in the maturation of iron-sulfur cluster-containing proteins. Seems to help targeting proteins to be folded toward HscA. This Mannheimia succiniciproducens (strain KCTC 0769BP / MBEL55E) protein is Co-chaperone protein HscB homolog.